Reading from the N-terminus, the 446-residue chain is Phosphoglucosamine mutase (446 aa).

S99 acts as the Phosphoserine intermediate in catalysis. The Mg(2+) site is built by S99, D242, D244, and D246. S99 bears the Phosphoserine mark.

The protein belongs to the phosphohexose mutase family. It depends on Mg(2+) as a cofactor. Activated by phosphorylation.

It carries out the reaction alpha-D-glucosamine 1-phosphate = D-glucosamine 6-phosphate. Catalyzes the conversion of glucosamine-6-phosphate to glucosamine-1-phosphate. The chain is Phosphoglucosamine mutase from Campylobacter fetus subsp. fetus (strain 82-40).